The following is a 206-amino-acid chain: LexA repressor (206 aa).

The H-T-H motif DNA-binding region spans 28–48 (RAEIARELGFRSANAAEEHLK). Active-site for autocatalytic cleavage activity residues include S123 and K160.

It belongs to the peptidase S24 family. Homodimer.

The catalysed reaction is Hydrolysis of Ala-|-Gly bond in repressor LexA.. Represses a number of genes involved in the response to DNA damage (SOS response), including recA and lexA. In the presence of single-stranded DNA, RecA interacts with LexA causing an autocatalytic cleavage which disrupts the DNA-binding part of LexA, leading to derepression of the SOS regulon and eventually DNA repair. This chain is LexA repressor, found in Vibrio parahaemolyticus serotype O3:K6 (strain RIMD 2210633).